The chain runs to 309 residues: Thioredoxin reductase (309 aa).

Glutamate 35–lysine 42 provides a ligand contact to FAD. A disulfide bond links cysteine 134 and cysteine 137. Aspartate 277–isoleucine 286 provides a ligand contact to FAD.

This sequence belongs to the class-II pyridine nucleotide-disulfide oxidoreductase family. As to quaternary structure, homodimer. FAD is required as a cofactor.

The protein resides in the cytoplasm. It catalyses the reaction [thioredoxin]-dithiol + NADP(+) = [thioredoxin]-disulfide + NADPH + H(+). In Ureaplasma parvum serovar 3 (strain ATCC 700970), this protein is Thioredoxin reductase (trxB).